Consider the following 84-residue polypeptide: RNA-binding protein Hfq (84 aa).

A Sm domain is found at 10 to 70; that stretch reads DNVLNQVRKN…VSTIIPGKTL (61 aa).

This sequence belongs to the Hfq family. As to quaternary structure, homohexamer.

Its function is as follows. RNA chaperone that binds small regulatory RNA (sRNAs) and mRNAs to facilitate mRNA translational regulation in response to envelope stress, environmental stress and changes in metabolite concentrations. Also binds with high specificity to tRNAs. The protein is RNA-binding protein Hfq of Natranaerobius thermophilus (strain ATCC BAA-1301 / DSM 18059 / JW/NM-WN-LF).